The sequence spans 130 residues: Serum amyloid A-4 protein (130 aa).

Positions M1 to S18 are cleaved as a signal peptide. A glycan (N-linked (GlcNAc...) asparagine; partial) is linked at N94. Residues D101–Y130 are disordered.

Belongs to the SAA family. Apolipoprotein of the HDL complex. In terms of tissue distribution, expressed by the liver; secreted in plasma.

It is found in the secreted. Major acute phase reactant. The sequence is that of Serum amyloid A-4 protein from Homo sapiens (Human).